We begin with the raw amino-acid sequence, 337 residues long: Ketol-acid reductoisomerase (NADP(+)) (337 aa).

A KARI N-terminal Rossmann domain is found at 3–183 (VEMFYDDDAD…GGTRAGVIKT (181 aa)). Residues 26-29 (YGSQ), Lys49, Ser52, Ser54, and 84-87 (DTAQ) each bind NADP(+). Residue His109 is part of the active site. Position 135 (Gly135) interacts with NADP(+). The region spanning 184-329 (TFKEETETDL…KKLRDLMSWV (146 aa)) is the KARI C-terminal knotted domain. Positions 192, 196, 228, and 232 each coordinate Mg(2+). Ser253 lines the substrate pocket.

The protein belongs to the ketol-acid reductoisomerase family. Mg(2+) is required as a cofactor.

It carries out the reaction (2R)-2,3-dihydroxy-3-methylbutanoate + NADP(+) = (2S)-2-acetolactate + NADPH + H(+). It catalyses the reaction (2R,3R)-2,3-dihydroxy-3-methylpentanoate + NADP(+) = (S)-2-ethyl-2-hydroxy-3-oxobutanoate + NADPH + H(+). It functions in the pathway amino-acid biosynthesis; L-isoleucine biosynthesis; L-isoleucine from 2-oxobutanoate: step 2/4. It participates in amino-acid biosynthesis; L-valine biosynthesis; L-valine from pyruvate: step 2/4. Functionally, involved in the biosynthesis of branched-chain amino acids (BCAA). Catalyzes an alkyl-migration followed by a ketol-acid reduction of (S)-2-acetolactate (S2AL) to yield (R)-2,3-dihydroxy-isovalerate. In the isomerase reaction, S2AL is rearranged via a Mg-dependent methyl migration to produce 3-hydroxy-3-methyl-2-ketobutyrate (HMKB). In the reductase reaction, this 2-ketoacid undergoes a metal-dependent reduction by NADPH to yield (R)-2,3-dihydroxy-isovalerate. The polypeptide is Ketol-acid reductoisomerase (NADP(+)) (Rhodococcus erythropolis (strain PR4 / NBRC 100887)).